Consider the following 351-residue polypeptide: Alternative oxidase, mitochondrial (351 aa).

Residues 147–167 traverse the membrane as a helical segment; sequence LTRFIFLESVAGVPGMVGGML. Fe cation-binding residues include Glu-154, Glu-193, and His-196. Residues 212-232 form a helical membrane-spanning segment; it reads LMVLGAQGVFFNGFFLSYLMS. Residues Glu-244, Glu-245, Glu-299, and His-302 each contribute to the Fe cation site. Positions 322–351 are disordered; the sequence is AAKYKDPTKAHPNKGIADLKPTGWEREEVI.

Belongs to the alternative oxidase family. Requires Fe cation as cofactor.

Its subcellular location is the mitochondrion inner membrane. Its function is as follows. Catalyzes cyanide-resistant oxygen consumption. May increase respiration when the cytochrome respiratory pathway is restricted, or in response to low temperatures. The polypeptide is Alternative oxidase, mitochondrial (aox1) (Aspergillus niger).